A 455-amino-acid polypeptide reads, in one-letter code: La-related protein 6C (455 aa).

The span at Met1–Asp20 shows a compositional bias: basic and acidic residues. Residues Met1–Gln29 are disordered. In terms of domain architecture, HTH La-type RNA-binding spans Asn138–Asp229. The region spanning Arg236–Arg324 is the RRM domain. 2 disordered regions span residues Ser348–Gly396 and Ser414–Leu455.

The protein localises to the nucleus. Functionally, transcriptional regulator. The chain is La-related protein 6C (LARP6C) from Arabidopsis thaliana (Mouse-ear cress).